The sequence spans 336 residues: Dihydroorotate dehydrogenase (quinone) (336 aa).

Residues 62–66 and threonine 86 each bind FMN; that span reads AGLDK. Position 66 (lysine 66) interacts with substrate. 111–115 provides a ligand contact to substrate; that stretch reads NRMGF. FMN is bound by residues asparagine 139 and asparagine 172. A substrate-binding site is contributed by asparagine 172. Residue serine 175 is the Nucleophile of the active site. Asparagine 177 is a binding site for substrate. Residues lysine 217 and threonine 245 each contribute to the FMN site. 246 to 247 is a binding site for substrate; sequence NT. Residues glycine 268, glycine 297, and 318 to 319 each bind FMN; that span reads YS.

This sequence belongs to the dihydroorotate dehydrogenase family. Type 2 subfamily. As to quaternary structure, monomer. FMN serves as cofactor.

It localises to the cell membrane. The enzyme catalyses (S)-dihydroorotate + a quinone = orotate + a quinol. Its pathway is pyrimidine metabolism; UMP biosynthesis via de novo pathway; orotate from (S)-dihydroorotate (quinone route): step 1/1. Functionally, catalyzes the conversion of dihydroorotate to orotate with quinone as electron acceptor. The chain is Dihydroorotate dehydrogenase (quinone) from Hamiltonella defensa subsp. Acyrthosiphon pisum (strain 5AT).